The following is a 209-amino-acid chain: Uracil phosphoribosyltransferase (209 aa).

5-phospho-alpha-D-ribose 1-diphosphate contacts are provided by residues R79, R104, and 131 to 139; that span reads DPMLATGGT. Uracil contacts are provided by residues I194 and 199-201; that span reads GDA. D200 contacts 5-phospho-alpha-D-ribose 1-diphosphate.

The protein belongs to the UPRTase family. Requires Mg(2+) as cofactor.

It catalyses the reaction UMP + diphosphate = 5-phospho-alpha-D-ribose 1-diphosphate + uracil. It participates in pyrimidine metabolism; UMP biosynthesis via salvage pathway; UMP from uracil: step 1/1. With respect to regulation, allosterically activated by GTP. Its function is as follows. Catalyzes the conversion of uracil and 5-phospho-alpha-D-ribose 1-diphosphate (PRPP) to UMP and diphosphate. This is Uracil phosphoribosyltransferase from Pseudoalteromonas translucida (strain TAC 125).